Consider the following 585-residue polypeptide: 3-hydroxy-3-methylglutaryl-coenzyme A reductase 1 (585 aa).

The next 2 membrane-spanning stretches (helical) occupy residues 38 to 58 (LYLT…FLLC) and 77 to 97 (EIVA…FFGI). A linker region spans residues 98-169 (DFVQSLVLRP…DEMPVTVMTE (72 aa)). The catalytic stretch occupies residues 170–585 (EDEEIIRSVV…SSKDVSKVSS (416 aa)). The active-site Charge relay system is the glutamate 264. Asparagine 328 carries an N-linked (GlcNAc...) asparagine glycan. The Charge relay system role is filled by lysine 396. Residue asparagine 441 is glycosylated (N-linked (GlcNAc...) asparagine). The Charge relay system role is filled by aspartate 472. Histidine 570 (proton donor) is an active-site residue. Residue asparagine 574 is glycosylated (N-linked (GlcNAc...) asparagine).

This sequence belongs to the HMG-CoA reductase family.

The protein resides in the endoplasmic reticulum membrane. It is found in the mitochondrion membrane. Its subcellular location is the plastid membrane. The catalysed reaction is (R)-mevalonate + 2 NADP(+) + CoA = (3S)-3-hydroxy-3-methylglutaryl-CoA + 2 NADPH + 2 H(+). The protein operates within metabolic intermediate biosynthesis; (R)-mevalonate biosynthesis; (R)-mevalonate from acetyl-CoA: step 3/3. Catalyzes the synthesis of mevalonate. The specific precursor of all isoprenoid compounds present in plants. This is 3-hydroxy-3-methylglutaryl-coenzyme A reductase 1 (HMG1) from Gossypium hirsutum (Upland cotton).